The chain runs to 1733 residues: ATP-binding cassette sub-family A member 17 (1733 aa).

Helical transmembrane passes span 22 to 42, 262 to 282, 306 to 326, 342 to 362, 372 to 392, 403 to 423, and 444 to 464; these read TLITLLEMLMPLLFCAIVLYL, FPLLLMLSFICVELIITNSVL, AWFITFFISVSITVSVMTVLF, TLIFIFLMCFAIATIFFAFMM, GTVIGGTVFFFTYLPYMYITF, ILSCLFSNVAMATGVRFISLF, and FAQVLGMLLLDSFLYCLIAFL. Positions 519–752 constitute an ABC transporter 1 domain; it reads IEIQHLYKVF…YGAGYYMTII (234 aa). An ATP-binding site is contributed by 555–562; the sequence is GHNGAGKT. A glycan (N-linked (GlcNAc...) asparagine) is linked at N609. The next 7 helical transmembrane spans lie at 906 to 926, 1082 to 1102, 1128 to 1148, 1160 to 1180, 1192 to 1212, 1230 to 1250, and 1287 to 1307; these read LVLSVQVLLPLAIIMLSLTFF, LVVNFLFGIAFLSSSFSILTV, LLWDLISFLVPTLLLVLVFLW, IPAVVLIMMLYGWAVIPLVYT, CVKLVVMLTFLSISPVVLVTV, IFLILPGHCLGMALSNLYYNF, and IGKYLTALAVLGPVYITMLFL. The ABC transporter 2 domain maps to 1366–1599; sequence LVVKEVSKVY…FGISYSLQAK (234 aa). ATP is bound at residue 1401–1408; that stretch reads GLNGAGKT. Over residues 1681 to 1692 the composition is skewed to polar residues; that stretch reads ESSTKEQIQQEQ. Positions 1681-1733 are disordered; it reads ESSTKEQIQQEQAVLASPSPPSNSRPISSPPSRLSSPTPKPLPSPPPSEPILL. A compositionally biased stretch (low complexity) spans 1704–1717; that stretch reads SRPISSPPSRLSSP. Residues 1718 to 1733 show a composition bias toward pro residues; the sequence is TPKPLPSPPPSEPILL.

The protein belongs to the ABC transporter superfamily. ABCA family. Post-translationally, N-glycosylated. As to expression, in the testis, detected predominantly in elongated spermatids at the late stage of germ cell development and in sperm, with no expression detected in immature germ cells such as spermatogonia and spermatocytes or in somatic cells such as Sertoli cells (at protein level). Expressed in the head and tail midpiece of elongated spermatids and sperm (at protein level). Expressed exclusively in the testis.

It is found in the endoplasmic reticulum membrane. The protein localises to the cytoplasm. The catalysed reaction is cholesterol(in) + ATP + H2O = cholesterol(out) + ADP + phosphate + H(+). In terms of biological role, promotes cholesterol efflux from sperm which renders sperm capable of fertilization. Has also been shown to decrease levels of intracellular esterified neutral lipids including cholesteryl esters, fatty acid esters and triacylglycerols. The protein is ATP-binding cassette sub-family A member 17 of Mus musculus (Mouse).